Here is a 656-residue protein sequence, read N- to C-terminus: Pentatricopeptide repeat-containing protein At1g62260, mitochondrial (656 aa).

15 PPR repeats span residues 70–104, 105–134, 135–169, 170–200, 203–227, 234–264, 280–310, 311–345, 346–372, 373–407, 408–438, 442–472, 474–508, 509–544, and 545–575; these read NTVT…DVVT, WNTM…MPSR, DSFS…NAVS, WSAM…DSSP, ALVA…YGSL, LVYA…IPDL, NVVS…MKDR, DTIS…DAHS, WNMM…TPEK, HTVS…GEKP, DPHT…VVKT, DVPV…MKLK, EVIT…GIYP, SHIT…KIEP, and QMEH…MPFE. The segment at 580-655 is type E motif; the sequence is VWGALLDACR…ERGSSWVDSS (76 aa).

Belongs to the PPR family. PCMP-E subfamily.

The protein localises to the mitochondrion. The sequence is that of Pentatricopeptide repeat-containing protein At1g62260, mitochondrial (PCMP-E10) from Arabidopsis thaliana (Mouse-ear cress).